Here is a 188-residue protein sequence, read N- to C-terminus: Protein SSX5 (188 aa).

A KRAB-related domain is found at 20 to 83 (KMQKAFDDIA…KRVADFQGND (64 aa)). Residues 78–188 (DFQGNDFDND…EISDPQEDDE (111 aa)) form a disordered region. Over residues 112-122 (TPEKPAEEGND) the composition is skewed to basic and acidic residues. Positions 144–155 (KLNTSEKVNKTS) are enriched in polar residues. The segment covering 156–170 (GPKRGKHAWTHRVRE) has biased composition (basic residues). The segment covering 179 to 188 (EISDPQEDDE) has biased composition (acidic residues).

It belongs to the SSX family.

Functionally, could act as a modulator of transcription. The protein is Protein SSX5 (SSX5) of Homo sapiens (Human).